Here is a 268-residue protein sequence, read N- to C-terminus: Tryptophan synthase alpha chain (268 aa).

Catalysis depends on proton acceptor residues E49 and D60.

The protein belongs to the TrpA family. Tetramer of two alpha and two beta chains.

It carries out the reaction (1S,2R)-1-C-(indol-3-yl)glycerol 3-phosphate + L-serine = D-glyceraldehyde 3-phosphate + L-tryptophan + H2O. The protein operates within amino-acid biosynthesis; L-tryptophan biosynthesis; L-tryptophan from chorismate: step 5/5. Its function is as follows. The alpha subunit is responsible for the aldol cleavage of indoleglycerol phosphate to indole and glyceraldehyde 3-phosphate. This is Tryptophan synthase alpha chain from Vibrio vulnificus (strain CMCP6).